The following is an 899-amino-acid chain: AP-3 complex subunit delta (899 aa).

HEAT repeat units lie at residues Q37–Y74, E155–E192, L194–Q229, F231–K267, L268–D305, D308–T344, D345–L382, D384–M428, R480–N518, E536–S580, S590–L613, and L614–E656. Disordered regions lie at residues D668–E701, N741–K768, G782–N801, and A849–E899. A compositionally biased stretch (low complexity) spans S743–E759. Residues Q841 to R862 are a coiled coil. Over residues V857 to P880 the composition is skewed to basic residues.

Belongs to the adaptor complexes large subunit family. In terms of assembly, adaptor protein complex 3 (AP-3) is a heterotetramer composed of 2 large adaptins (APL5 and APL6), a medium adaptin (APM3) and a small adaptin (APS3).

The protein localises to the golgi apparatus. It is found in the cytoplasmic vesicle. It localises to the clathrin-coated vesicle membrane. Its function is as follows. Part of the AP-3 complex, an adaptor-related complex which is not clathrin-associated. The complex is associated with the Golgi region as well as more peripheral structures. It facilitates the budding of vesicles from the Golgi membrane and may be directly involved in trafficking to the vacuole. This chain is AP-3 complex subunit delta (APL5), found in Eremothecium gossypii (strain ATCC 10895 / CBS 109.51 / FGSC 9923 / NRRL Y-1056) (Yeast).